A 371-amino-acid polypeptide reads, in one-letter code: Queuine tRNA-ribosyltransferase (371 aa).

D90 acts as the Proton acceptor in catalysis. Substrate contacts are provided by residues D90–F94, D144, Q188, and G215. Residues G246–D252 are RNA binding. D265 (nucleophile) is an active-site residue. The RNA binding; important for wobble base 34 recognition stretch occupies residues T270–R274. Residues C303, C305, C308, and H334 each contribute to the Zn(2+) site.

This sequence belongs to the queuine tRNA-ribosyltransferase family. In terms of assembly, homodimer. Within each dimer, one monomer is responsible for RNA recognition and catalysis, while the other monomer binds to the replacement base PreQ1. It depends on Zn(2+) as a cofactor.

The catalysed reaction is 7-aminomethyl-7-carbaguanine + guanosine(34) in tRNA = 7-aminomethyl-7-carbaguanosine(34) in tRNA + guanine. It participates in tRNA modification; tRNA-queuosine biosynthesis. Catalyzes the base-exchange of a guanine (G) residue with the queuine precursor 7-aminomethyl-7-deazaguanine (PreQ1) at position 34 (anticodon wobble position) in tRNAs with GU(N) anticodons (tRNA-Asp, -Asn, -His and -Tyr). Catalysis occurs through a double-displacement mechanism. The nucleophile active site attacks the C1' of nucleotide 34 to detach the guanine base from the RNA, forming a covalent enzyme-RNA intermediate. The proton acceptor active site deprotonates the incoming PreQ1, allowing a nucleophilic attack on the C1' of the ribose to form the product. After dissociation, two additional enzymatic reactions on the tRNA convert PreQ1 to queuine (Q), resulting in the hypermodified nucleoside queuosine (7-(((4,5-cis-dihydroxy-2-cyclopenten-1-yl)amino)methyl)-7-deazaguanosine). The chain is Queuine tRNA-ribosyltransferase from Neisseria meningitidis serogroup A / serotype 4A (strain DSM 15465 / Z2491).